Reading from the N-terminus, the 417-residue chain is Imidazolonepropionase (417 aa).

2 residues coordinate Fe(3+): histidine 80 and histidine 82. Residues histidine 80 and histidine 82 each coordinate Zn(2+). Residues arginine 89, tyrosine 152, and histidine 187 each coordinate 4-imidazolone-5-propanoate. An N-formimidoyl-L-glutamate-binding site is contributed by tyrosine 152. Residue histidine 252 participates in Fe(3+) binding. Histidine 252 provides a ligand contact to Zn(2+). Glutamate 255 is a binding site for 4-imidazolone-5-propanoate. Position 326 (aspartate 326) interacts with Fe(3+). Aspartate 326 is a binding site for Zn(2+). Positions 328 and 330 each coordinate N-formimidoyl-L-glutamate. Serine 331 is a binding site for 4-imidazolone-5-propanoate.

This sequence belongs to the metallo-dependent hydrolases superfamily. HutI family. Zn(2+) serves as cofactor. It depends on Fe(3+) as a cofactor.

The protein localises to the cytoplasm. It catalyses the reaction 4-imidazolone-5-propanoate + H2O = N-formimidoyl-L-glutamate. It participates in amino-acid degradation; L-histidine degradation into L-glutamate; N-formimidoyl-L-glutamate from L-histidine: step 3/3. Catalyzes the hydrolytic cleavage of the carbon-nitrogen bond in imidazolone-5-propanoate to yield N-formimidoyl-L-glutamate. It is the third step in the universal histidine degradation pathway. This Bacteroides fragilis (strain ATCC 25285 / DSM 2151 / CCUG 4856 / JCM 11019 / LMG 10263 / NCTC 9343 / Onslow / VPI 2553 / EN-2) protein is Imidazolonepropionase.